Reading from the N-terminus, the 430-residue chain is Potassium channel subfamily K member 12 (430 aa).

Over 1–38 the chain is Cytoplasmic; that stretch reads MSSRSPRPPPRRCRRRLPRPSCCCCCCRRSHLNEDTGR. The ER retention/retrieval signal stretch occupies residues 11–16; it reads RRCRRR. A helical transmembrane segment spans residues 39-59; it reads FVLLAALIGLYLVAGATVFSA. N-linked (GlcNAc...) asparagine glycosylation is present at Asn78. Residues 114-134 constitute an intramembrane region (pore-forming); the sequence is WDFPGAFYFVGTVVSTIGFGM. K(+) is bound by residues Thr129, Ile130, and Gly131. Positions 129 to 134 are selectivity filter 1; that stretch reads TIGFGM. A helical transmembrane segment spans residues 145–165; sequence FLIAYGLFGCAGTILFFNLFL. The Cytoplasmic portion of the chain corresponds to 166-212; it reads ERIISLLAFIMRACRERQLRRSGLLPATFRRGSALSEADSLAGWKPS. A helical transmembrane segment spans residues 213 to 233; sequence VYHVLLILGLFAVLLACCASA. An intramembrane region (pore-forming) is located at residues 243 to 263; sequence YVDSLYFCFVTFSTIGFGDLV. Residues Thr256, Ile257, Gly258, and Phe259 each contribute to the K(+) site. A selectivity filter 2 region spans residues 256–261; the sequence is TIGFGD. A helical membrane pass occupies residues 282-302; it reads LFILLGVCCIYSLFNVISILI. Residues 303-430 lie on the Cytoplasmic side of the membrane; the sequence is KQVLNWMLRK…NRLAETSASR (128 aa).

Belongs to the two pore domain potassium channel (TC 1.A.1.8) family. Homodimer. Heterodimer with KCNK13. As to expression, highly expressed in most brain regions. Also expressed in other tissues such as lung, kidney, liver, stomach and spleen.

The protein localises to the cell membrane. Its subcellular location is the endoplasmic reticulum membrane. The enzyme catalyses K(+)(in) = K(+)(out). Functionally, k(+) channel subunit that may homo- and heterodimerize to form functional channels with distinct regulatory and gating properties. Can heterodimerize with KCNK13 subunit to conduct K(+) outward rectifying currents at the plasma membrane. The homodimers are mainly retained in the endoplasmic reticulum compartment and may be targeted to the cell surface upon phosphorylation or other activation signals yet to be elucidated. This chain is Potassium channel subfamily K member 12 (Kcnk12), found in Rattus norvegicus (Rat).